Reading from the N-terminus, the 483-residue chain is Chromatin structure-remodeling complex protein RSC6 (483 aa).

Disordered regions lie at residues 142–183 and 273–309; these read KRKR…EAES and AQDGSNDAEDSSNENNNKNGAGDDDGVEGSTPKDKPE. The span at 148–158 shows a compositional bias: low complexity; the sequence is SLSLPLNLQQP. Acidic residues predominate over residues 171–180; the sequence is DNGEDEDSAE.

It to yeast SNF12. In terms of assembly, interacts directly with RSC8. Component of the two forms of the RSC complex composed of at least either RSC1 or RSC2, and ARP7, ARP9, LDB7, NPL6, RSC3, RSC30, RSC4, RSC58, RSC6, RSC8, RSC9, SFH1, STH1, HTL1 and probably RTT102. The complexes interact with histone and histone variant components of centromeric chromatin.

It localises to the nucleus. Functionally, component of the chromatin structure-remodeling complex (RSC), which is involved in transcription regulation and nucleosome positioning. RSC is responsible for the transfer of a histone octamer from a nucleosome core particle to naked DNA. The reaction requires ATP and involves an activated RSC-nucleosome intermediate. Remodeling reaction also involves DNA translocation, DNA twist and conformational change. As a reconfigurer of centromeric and flanking nucleosomes, RSC complex is required both for proper kinetochore function in chromosome segregation and, via a PKC1-dependent signaling pathway, for organization of the cellular cytoskeleton. This subunit is essential for mitotic growth and suppresses formamide sensitivity of the RSC8 mutants. This Saccharomyces cerevisiae (strain ATCC 204508 / S288c) (Baker's yeast) protein is Chromatin structure-remodeling complex protein RSC6 (RSC6).